The sequence spans 426 residues: Serine--tRNA ligase (426 aa).

Residue 233-235 (TAE) participates in L-serine binding. An ATP-binding site is contributed by 264–266 (RSE). Glu-287 provides a ligand contact to L-serine. 351-354 (EISS) is an ATP binding site. Residue Ser-387 participates in L-serine binding.

It belongs to the class-II aminoacyl-tRNA synthetase family. Type-1 seryl-tRNA synthetase subfamily. As to quaternary structure, homodimer. The tRNA molecule binds across the dimer.

It localises to the cytoplasm. It catalyses the reaction tRNA(Ser) + L-serine + ATP = L-seryl-tRNA(Ser) + AMP + diphosphate + H(+). The enzyme catalyses tRNA(Sec) + L-serine + ATP = L-seryl-tRNA(Sec) + AMP + diphosphate + H(+). It functions in the pathway aminoacyl-tRNA biosynthesis; selenocysteinyl-tRNA(Sec) biosynthesis; L-seryl-tRNA(Sec) from L-serine and tRNA(Sec): step 1/1. Catalyzes the attachment of serine to tRNA(Ser). Is also able to aminoacylate tRNA(Sec) with serine, to form the misacylated tRNA L-seryl-tRNA(Sec), which will be further converted into selenocysteinyl-tRNA(Sec). This is Serine--tRNA ligase from Pseudomonas paraeruginosa (strain DSM 24068 / PA7) (Pseudomonas aeruginosa (strain PA7)).